We begin with the raw amino-acid sequence, 103 residues long: Small ribosomal subunit protein uS10 (103 aa).

This sequence belongs to the universal ribosomal protein uS10 family. In terms of assembly, part of the 30S ribosomal subunit.

Functionally, involved in the binding of tRNA to the ribosomes. This chain is Small ribosomal subunit protein uS10, found in Azotobacter vinelandii (strain DJ / ATCC BAA-1303).